A 153-amino-acid chain; its full sequence is 1,4-dihydroxy-2-naphthoyl-CoA hydrolase (153 aa).

Residue Asp21 is part of the active site.

This sequence belongs to the 4-hydroxybenzoyl-CoA thioesterase family. DHNA-CoA hydrolase subfamily.

It catalyses the reaction 1,4-dihydroxy-2-naphthoyl-CoA + H2O = 1,4-dihydroxy-2-naphthoate + CoA + H(+). Its pathway is cofactor biosynthesis; phylloquinone biosynthesis. It participates in quinol/quinone metabolism; 1,4-dihydroxy-2-naphthoate biosynthesis; 1,4-dihydroxy-2-naphthoate from chorismate: step 7/7. In terms of biological role, catalyzes the hydrolysis of 1,4-dihydroxy-2-naphthoyl-CoA (DHNA-CoA) to 1,4-dihydroxy-2-naphthoate (DHNA), a reaction involved in phylloquinone (vitamin K1) biosynthesis. This chain is 1,4-dihydroxy-2-naphthoyl-CoA hydrolase, found in Synechococcus sp. (strain WH7803).